The following is a 316-amino-acid chain: Ribonuclease Z (316 aa).

Positions 61, 63, 65, 66, 152, 220, and 279 each coordinate Zn(2+). The Proton acceptor role is filled by D65.

It belongs to the RNase Z family. As to quaternary structure, homodimer. Zn(2+) serves as cofactor.

The catalysed reaction is Endonucleolytic cleavage of RNA, removing extra 3' nucleotides from tRNA precursor, generating 3' termini of tRNAs. A 3'-hydroxy group is left at the tRNA terminus and a 5'-phosphoryl group is left at the trailer molecule.. Its function is as follows. Zinc phosphodiesterase, which displays some tRNA 3'-processing endonuclease activity. Probably involved in tRNA maturation, by removing a 3'-trailer from precursor tRNA. In Clostridium perfringens (strain ATCC 13124 / DSM 756 / JCM 1290 / NCIMB 6125 / NCTC 8237 / Type A), this protein is Ribonuclease Z.